Reading from the N-terminus, the 602-residue chain is MAAAPSATAPKHNYTLGTNASQLELYKYLKTVPPIPELRQAVTIKKYEEASVDDTLYPLIDEHQIIMVVGAFFGDEGKGKTVDAVARHPACTCVARVNSGENAGHTVFDDIGRKYVFNLAPSSLLTPNTRNYVSSECVMDPISFMEREIGQFIKSNMPYKDKLFVGNVFVVTPYHKLLDLLGSAPNSSTLKGMSPIHASKVTKRGIRLDHIFNDEGVLRARLAKDMDTYYGLLKVKGLTDKDVVRRCEEENADGVERVPGYVVDFARAENKIDYLVKLYTERVKNNKDFPRRCDVTHELRAALARGEKLLLEGPQSYWLSNAREKFWESTTSADTTAGGLLASAQFNFQRYKVLVINVHKAPGSSRVGIGANPSSFVPQDYYSAQDIKTLEALPKGGCVDFDKIQNFFYTKAFNTESKTFNGIYEPLEYEDATGKYNIGVAMSIASARHHGECGAVTKKPRVCGFFDCVLHFEVNAVQGPYLSISAVDRGDDYDRIGITIAYVYYDVGNKMVDANGRVYKNGDIIKAGDPVPCEMALYHCYPIVKVINGWKGAPIAASKRRPNEPLPKGVCEFIANVEFFTGAKVISIGNGPRGSDIIYLKQ.

Residues 74 to 80 (GDEGKGK) and 104 to 106 (GHT) each bind GTP. Residue Asp75 is the Proton acceptor of the active site. Residues Asp75 and Gly104 each contribute to the Mg(2+) site. Residues 75 to 78 (DEGK), 102 to 105 (NAGH), Thr189, Lys203, Gln315, Thr331, and Lys459 contribute to the IMP site. The active-site Proton donor is His105. 455 to 461 (AVTKKPR) is a substrate binding site. Residues Arg461 and 589 to 591 (GNG) each bind GTP.

The protein belongs to the adenylosuccinate synthetase family. In terms of assembly, homodimer. Mg(2+) is required as a cofactor.

It is found in the cytoplasm. The enzyme catalyses IMP + L-aspartate + GTP = N(6)-(1,2-dicarboxyethyl)-AMP + GDP + phosphate + 2 H(+). Its pathway is purine metabolism; AMP biosynthesis via de novo pathway; AMP from IMP: step 1/2. Functionally, plays an important role in the salvage pathway for purine nucleotide biosynthesis. Catalyzes the first committed step in the biosynthesis of AMP from IMP. The sequence is that of Adenylosuccinate synthetase from Trypanosoma brucei gambiense (strain MHOM/CI/86/DAL972).